A 1203-amino-acid polypeptide reads, in one-letter code: MPATNQGWPEDFGFQLGGSGPCFVIEVAEGSSAHAGGLRPGDQILEVEGLAVGGLSRERIVRLARRCPRVPPSLGVLPGPEGGPTALTAAWLTRRFGRSLPLSRELLRLAGGPRPDAVHRERRRKAQEFSCQVDDILGDRLTAKEQVFTALKQFAAEQRVDELVWTLTLVLPSEAQGPVLDNLRIFIPKKHRARFDEVVSQGLLGKLCRARRAQGAQRLRRSRSEERPERLLVSTRASAAPRRPDEPPPRKATSLLGGRTGPGGPRRTVRVYKGNKSFGFTLRGHGPVWIESVLPGSPAENASLKSGDRILFLNGLDMRNCSHDKVVSMLQGSGAMPTLVVEEGPVPFASDSDSLDSPTRASALTSLQWVADILPSSIRVQGRTFSQQLDHLLTPPERYGVCRALERFFQHRNIDTLIVDVYPVLDTPAKQVLWQFLYQLLTYEEQELCQEKIACFLGYTAMTEPESSLDLEPESTPEPTPEPQPRSSLRASSMCRRSLRSQGLETSLSCGPGDCPEMPLPLIPGERQAGDGTSLPETPNPKMMSAVYAELESRLNSSFKGKIGTMSKSRASPPVPSLVGTSGPRTLSGVSWPSDRLLPSPCYDPLCSGGLASPSSSESHPYASLDSSRAPSPQPGLGSIHADSPPSPDPIRPPSRRKLFAFSRPVRSRDTDRFLDALSEQLGPRLSIVDDFLTPENDYEEMSFHDDQGSFVTNERSSASECVSSSEEGSSLTYSSISDHIPPPPLSPPPPPPLPFHDPKPSSRTSDGPRGPPQSLTKPLTQINHPVPPPPPPPLPPPVPCAPPMLSRGVGHRRSETSHMSVKRLRWEQVENSEGTIWGQLGEDSDYDKLSDMVKYLDLELHFGTQKPPKPVPGPEPFRKKEVVEILSHKKAYNTSILLAHLKLTPGELRQVLMSMEPRRLEPAHLAQLLLFAPDADEEQRYQAFREAPGRLSEPDQFVLQMLSVPEYKTRLRSLHFQATLQEKTEEIRGSLECLRQASLELKNSRKLAKILEFVLAMGNYLNDGQPKTNKTTGFKINFLTELNSTKTVDGKSTFLHILAKSLSQHFPELLGFAQDLPTVPLAAKVNQRALTGDLADLHDTVSEIQVACQSMAPSSEDRFAVVMASFLETAQPALRALDGLQREAMEELGKALAFFGEDSKATTSEAFFGIFSEFMSKFERALSDLQAGDGPRSSGMVSPLAW.

Residues M1–G79 form the PDZ 1 domain. A lipid anchor (S-palmitoyl cysteine) is attached at A3. The disordered stretch occupies residues G215–R270. A compositionally biased stretch (low complexity) spans L231–P241. The PDZ 2 domain occupies T268–P345. S303 is subject to Phosphoserine. Disordered stretches follow at residues E466 to P541, I563 to T586, L611 to R656, and S710 to S821. Positions R500–S509 are enriched in polar residues. Phosphoserine occurs at positions 572, 613, 644, and 647. Residues L611 to L625 are compositionally biased toward low complexity. Low complexity predominate over residues E715–H740. Over residues I741–F756 the composition is skewed to pro residues. Over residues Q774 to N784 the composition is skewed to polar residues. Positions P786–P803 are enriched in pro residues. The FH2 domain occupies H812–W1203.

Interacts with C-terminus of the glutamate receptor GRID2 via PDZ domain. Isoform 2 also interacts with Profilin-2/PFN2 and with the monocarboxylate transporter SLC16A7 via PDZ domain. The interaction of isoform 2 with GRID2 is dependent on GRID2 phosphorylation by PKA. Post-translationally, isoform 2 is palmitoylated. Palmitoylation of isoform 2 is necessary for the enhanced cell surface expression of GRID2, and is also responsible for the accumulation of isoform 2 within dendritic spines. Isoform 1 and isoform 2 are differentially localized, probably modulating GRID2 signaling in neurons. As to expression, isoform 1 is expressed in the cerebellum, but not in the cerebral cortex. Isoform 2 is expressed in the cell body of purkinge cells of the cerebellum and weakly expressed in the cerebrum and the brainstem as well as various nuclei of the thalamus. Isoform 2 is highly expressed in the cerebral cortex than in the cerebellum. Isoform 3 is expressed in the cerebellum and cerebrum.

Its subcellular location is the postsynaptic cell membrane. The protein resides in the cell projection. It is found in the dendritic spine. It localises to the synapse. The protein localises to the cell membrane. Its function is as follows. Postsynaptic scaffolding protein at the Purkinje cell synapse, where it may serve to link GRID2 with actin cytoskeleton and various signaling molecules. This is Delphilin (Grid2ip) from Mus musculus (Mouse).